Here is a 440-residue protein sequence, read N- to C-terminus: MGPPGSPWQWVTLLLGLLLPPAAPFWLLNVLFPPHTTPKAELSNHTRPVILVPGCLGNQLEAKLDKPDVVNWMCYRKTEDFFTIWLDLNMFLPLGVDCWIDNTRVVYNRSSGLVSNAPGVQIRVPGFGKTYSVEYLDSSKLAGYLHTLVQNLVNNGYVRDETVRAAPYDWRLEPGQQEEYYRKLAGLVEEMHAAYGKPVFLIGHSLGCLHLLYFLLRQPQAWKDRFIDGFISLGAPWGGSIKPMLVLASGDNQGIPIMSSIKLKEEQRITTTSPWMFPSRMAWPEDHVFISTPSFNYTGRDFQRFFADLHFEEGWYMWLQSRDLLAGLPAPGVEVYCLYGVGLPTPRTYIYDHGFPYTDPVGVLYEDGDDTVATRSTELCGLWQGRQPQPVHLLPLHGIQHLNMVFSNLTLEHINAILLGAYRQGPPASPTASPEPPPPE.

The N-terminal stretch at 1–24 (MGPPGSPWQWVTLLLGLLLPPAAP) is a signal peptide. An N-linked (GlcNAc...) (complex) asparagine glycan is attached at Asn44. An intrachain disulfide couples Cys74 to Cys98. The N-linked (GlcNAc...) (complex) asparagine glycan is linked to Asn108. Residue Ser205 is the Nucleophile of the active site. Asn296 is a glycosylation site (N-linked (GlcNAc...) (complex) asparagine). A disulfide bridge connects residues Cys337 and Cys380. Active-site charge relay system residues include Asp369 and His401. The N-linked (GlcNAc...) (complex) asparagine glycan is linked to Asn408. A glycan (O-linked (GalNAc...) threonine) is linked at Thr431. An O-linked (GalNAc...) serine glycan is attached at Ser433.

The protein belongs to the AB hydrolase superfamily. Lipase family. Post-translationally, O- and N-glycosylated. O-glycosylation on Thr-431 and Ser-433 consists of sialylated galactose beta 1--&gt;3N-acetylgalactosamine structures. N-glycosylated sites contain sialylated triantennary and/or biantennary complex structures. As to expression, detected in blood plasma. Detected in cerebral spinal fluid (at protein level). Detected in liver. Expressed mainly in brain, liver and testes.

It localises to the secreted. The catalysed reaction is a sterol + a 1,2-diacyl-sn-glycero-3-phosphocholine = a sterol ester + a 1-acyl-sn-glycero-3-phosphocholine. It catalyses the reaction a 1-O-alkyl-2-acetyl-sn-glycero-3-phosphocholine + H2O = a 1-O-alkyl-sn-glycero-3-phosphocholine + acetate + H(+). It carries out the reaction a 1-hexadecanoyl-2-acyl-sn-glycero-3-phosphocholine + (24S)-hydroxycholesterol = (24S)-24-hydroxycholesterol ester + 1-hexadecanoyl-sn-glycero-3-phosphocholine. The enzyme catalyses (24S)-hydroxycholesterol + 1-hexadecanoyl-2-(9Z,12Z-octadecadienoyl)-sn-glycero-3-phosphocholine = (24S)-hydroxycholesterol 3-linoleoate + 1-hexadecanoyl-sn-glycero-3-phosphocholine. The catalysed reaction is 1-hexadecanoyl-2-(5Z,8Z,11Z,14Z-eicosatetraenoyl)-sn-glycero-3-phosphocholine + cholesterol = cholesteryl (5Z,8Z,11Z,14Z)-eicosatetraenoate + 1-hexadecanoyl-sn-glycero-3-phosphocholine. It catalyses the reaction 1-hexadecanoyl-2-(9Z-octadecenoyl)-sn-glycero-3-phosphocholine + cholesterol = cholesteryl (9Z-octadecenoate) + 1-hexadecanoyl-sn-glycero-3-phosphocholine. It carries out the reaction 1-hexadecanoyl-2-(8Z,11Z,14Z-eicosatrienoyl)-sn-glycero-3-phosphocholine + cholesterol = cholesteryl (8Z,11Z,14Z)-eicosatrienoate + 1-hexadecanoyl-sn-glycero-3-phosphocholine. The enzyme catalyses 1-hexadecanoyl-2-(5Z,8Z,11Z-eicosatrienoyl)-sn-glycero-3-phosphocholine + cholesterol = cholesteryl (5Z,8Z,11Z)-eicosatrienoate + 1-hexadecanoyl-sn-glycero-3-phosphocholine. The catalysed reaction is 1-hexadecanoyl-2-(5Z,8Z,11Z,14Z,17Z-eicosapentaenoyl)-sn-glycero-3-phosphocholine + cholesterol = (5Z,8Z,11Z,14Z,17Z-eicosapentaenoyl)-cholesterol + 1-hexadecanoyl-sn-glycero-3-phosphocholine. It catalyses the reaction 1-hexadecanoyl-2-(9Z,12Z-octadecadienoyl)-sn-glycero-3-phosphocholine + cholesterol = cholesteryl (9Z,12Z)-octadecadienoate + 1-hexadecanoyl-sn-glycero-3-phosphocholine. It carries out the reaction 1-hexadecanoyl-2-(6Z,9Z,12Z-octadecatrienoyl)-sn-glycero-3-phosphocholine + cholesterol = (6Z,9Z,12Z-octadecatrienoyl)-cholesterol + 1-hexadecanoyl-sn-glycero-3-phosphocholine. The enzyme catalyses 1-hexadecanoyl-2-(11Z,14Z,17Z-eicosatrienoyl)-sn-glycero-3-phosphocholine + cholesterol = (11Z,14Z,17Z-eicosatrienoyl)-cholesterol + 1-hexadecanoyl-sn-glycero-3-phosphocholine. The catalysed reaction is 1-hexadecanoyl-2-(9Z,12Z,15Z-octadecatrienoyl)-sn-glycero-3-phosphocholine + cholesterol = (9Z,12Z,15Z-octadecatrienoyl)-cholesterol + 1-hexadecanoyl-sn-glycero-3-phosphocholine. It catalyses the reaction 1-hexadecanoyl-2-(9Z,12Z-octadecadienoyl)-sn-glycero-3-phosphocholine + H2O = (9Z,12Z)-octadecadienoate + 1-hexadecanoyl-sn-glycero-3-phosphocholine + H(+). It carries out the reaction 1-hexadecanoyl-2-(5Z,8Z,11Z,14Z-eicosatetraenoyl)-sn-glycero-3-phosphocholine + H2O = 1-hexadecanoyl-sn-glycero-3-phosphocholine + (5Z,8Z,11Z,14Z)-eicosatetraenoate + H(+). The enzyme catalyses a 1-O-alkyl-2-acetyl-sn-glycero-3-phosphocholine + 1-hexadecanoyl-sn-glycero-3-phosphocholine = 1-hexadecanoyl-2-acetyl-sn-glycero-3-phosphocholine + a 1-O-alkyl-sn-glycero-3-phosphocholine. APOA1 is the most potent activator in plasma. Also activated by APOE, APOC1 and APOA4. Inhibited by haptoglobin and 5,5'-dithiobis-(2-nitrobenzoic acid) (DTNB). In terms of biological role, central enzyme in the extracellular metabolism of plasma lipoproteins. Synthesized mainly in the liver and secreted into plasma where it converts cholesterol and phosphatidylcholines (lecithins) to cholesteryl esters and lysophosphatidylcholines on the surface of high and low density lipoproteins (HDLs and LDLs). The cholesterol ester is then transported back to the liver. Has a preference for plasma 16:0-18:2 or 18:O-18:2 phosphatidylcholines. Also produced in the brain by primary astrocytes, and esterifies free cholesterol on nascent APOE-containing lipoproteins secreted from glia and influences cerebral spinal fluid (CSF) APOE- and APOA1 levels. Together with APOE and the cholesterol transporter ABCA1, plays a key role in the maturation of glial-derived, nascent lipoproteins. Required for remodeling high-density lipoprotein particles into their spherical forms. Catalyzes the hydrolysis of 1-O-alkyl-2-acetyl-sn-glycero-3-phosphocholine (platelet-activating factor or PAF) to 1-O-alkyl-sn-glycero-3-phosphocholine (lyso-PAF). Also catalyzes the transfer of the acetate group from PAF to 1-hexadecanoyl-sn-glycero-3-phosphocholine forming lyso-PAF. Catalyzes the esterification of (24S)-hydroxycholesterol (24(S)OH-C), also known as cerebrosterol to produce 24(S)OH-C monoesters. The polypeptide is Phosphatidylcholine-sterol acyltransferase (LCAT) (Homo sapiens (Human)).